Reading from the N-terminus, the 119-residue chain is Protein Wnt-4 (119 aa).

A lipid anchor (O-palmitoleoyl serine; by PORCN) is attached at serine 1. 2 cysteine pairs are disulfide-bonded: cysteine 69/cysteine 100 and cysteine 85/cysteine 95. The N-linked (GlcNAc...) asparagine glycan is linked to asparagine 86.

Belongs to the Wnt family. In terms of processing, palmitoleoylation is required for efficient binding to frizzled receptors. Depalmitoleoylation leads to Wnt signaling pathway inhibition.

Its subcellular location is the secreted. It is found in the extracellular space. The protein resides in the extracellular matrix. Functionally, ligand for members of the frizzled family of seven transmembrane receptors. Plays an important role in embryonic development. This is Protein Wnt-4 (WNT-4) from Eptatretus stoutii (Pacific hagfish).